Consider the following 918-residue polypeptide: Serine/threonine-protein kinase D1 (918 aa).

Tyr-93 bears the Phosphotyrosine mark. The segment at 144 to 194 (PHALFVHSYRAPAFCDHCGEMLWGLVRQGLKCEGCGLNYHKRCAFKIPNNC) adopts a Phorbol-ester/DAG-type 1 zinc-finger fold. A phosphoserine mark is found at Ser-203, Ser-206, Ser-217, and Ser-221. The Phorbol-ester/DAG-type 2 zinc-finger motif lies at 276-326 (PHTFVIHSYTRPTVCQFCKKLLKGLFRQGLQCKDCRFNCHKRCAPKVPNNC). 2 disordered regions span residues 338-362 (SPGAESDVVMEEGSDDNDSERNSGL) and 380-408 (EGQSDGAEMQDPDADQEDSNRTISPSTSN). 2 stretches are compositionally biased toward acidic residues: residues 345-355 (VVMEEGSDDND) and 387-396 (EMQDPDADQE). At Ser-351 the chain carries Phosphoserine. Phosphoserine; by MAPK13 occurs at positions 403 and 407. Residues 428 to 547 (TVMKEGWMVH…WEVAIQHALM (120 aa)) form the PH domain. The residue at position 438 (Tyr-438) is a Phosphotyrosine. Position 454 is a phosphoserine (Ser-454). A Phosphotyrosine; by ABL modification is found at Tyr-469. At Tyr-508 the chain carries Phosphotyrosine. The residue at position 554 (Ser-554) is a Phosphoserine. The Protein kinase domain maps to 589–845 (IFPDEVLGSG…VDKTLSHPWL (257 aa)). Residues 595–603 (LGSGQFGIV) and Lys-618 contribute to the ATP site. Asp-712 functions as the Proton acceptor in the catalytic mechanism. The residue at position 744 (Ser-744) is a Phosphoserine; by PKC/PRKCD. Ser-748 is subject to Phosphoserine; by autocatalysis and PKC/PRKCD. Tyr-755 is subject to Phosphotyrosine. Residue Ser-916 is modified to Phosphoserine; by autocatalysis.

It belongs to the protein kinase superfamily. CAMK Ser/Thr protein kinase family. PKD subfamily. In terms of assembly, interacts (via N-terminus) with ADAP1/CENTA1. Interacts with MAPK13. Interacts with DAPK1 in an oxidative stress-regulated manner. Interacts with USP28; the interaction induces phosphorylation of USP28 and activated KRAS-mediated stabilization of ZNF304. Interacts with AKAP13 (via C-terminal domain). The cofactor is Mg(2+). Post-translationally, phosphorylated at Ser-403 and Ser-407 by MAPK13 during regulation of insulin secretion in pancreatic beta cells. Phosphorylated by DAPK1. Phosphorylated at Tyr-93 and by ABL at Tyr-469, which primes the kinase in response to oxidative stress, and promotes a second step activating phosphorylation at Ser-744/Ser-748 by PKRD. Phosphorylated on Ser-916 upon S.enterica infection in macrophages.

It is found in the cytoplasm. The protein resides in the cell membrane. It localises to the golgi apparatus. The protein localises to the trans-Golgi network. It catalyses the reaction L-seryl-[protein] + ATP = O-phospho-L-seryl-[protein] + ADP + H(+). The catalysed reaction is L-threonyl-[protein] + ATP = O-phospho-L-threonyl-[protein] + ADP + H(+). Its activity is regulated as follows. Activated by DAG and phorbol esters. Phorbol-ester/DAG-type domain 1 binds DAG with high affinity and appears to play the dominant role in mediating translocation to the cell membrane and trans-Golgi network. Phorbol-ester/DAG-type domain 2 binds phorbol ester with higher affinity. Autophosphorylation of Ser-748 and phosphorylation of Ser-744 by PKC relieves auto-inhibition by the PH domain. Phosphorylation on Tyr-469 by the SRC-ABL1 pathway in response to oxidative stress, is also required for activation. Activated by DAPK1 under oxidative stress. Serine/threonine-protein kinase that converts transient diacylglycerol (DAG) signals into prolonged physiological effects downstream of PKC, and is involved in the regulation of MAPK8/JNK1 and Ras signaling, Golgi membrane integrity and trafficking, cell survival through NF-kappa-B activation, cell migration, cell differentiation by mediating HDAC7 nuclear export, cell proliferation via MAPK1/3 (ERK1/2) signaling, and plays a role in cardiac hypertrophy, VEGFA-induced angiogenesis, genotoxic-induced apoptosis and flagellin-stimulated inflammatory response. Phosphorylates the epidermal growth factor receptor (EGFR) on dual threonine residues, which leads to the suppression of epidermal growth factor (EGF)-induced MAPK8/JNK1 activation and subsequent JUN phosphorylation. Phosphorylates RIN1, inducing RIN1 binding to 14-3-3 proteins YWHAB, YWHAE and YWHAZ and increased competition with RAF1 for binding to GTP-bound form of Ras proteins (NRAS, HRAS and KRAS). Acts downstream of the heterotrimeric G-protein beta/gamma-subunit complex to maintain the structural integrity of the Golgi membranes, and is required for protein transport along the secretory pathway. In the trans-Golgi network (TGN), regulates the fission of transport vesicles that are on their way to the plasma membrane. May act by activating the lipid kinase phosphatidylinositol 4-kinase beta (PI4KB) at the TGN for the local synthesis of phosphorylated inositol lipids, which induces a sequential production of DAG, phosphatidic acid (PA) and lyso-PA (LPA) that are necessary for membrane fission and generation of specific transport carriers to the cell surface. Under oxidative stress, is phosphorylated at Tyr-469 via SRC-ABL1 and contributes to cell survival by activating IKK complex and subsequent nuclear translocation and activation of NFKB1. Involved in cell migration by regulating integrin alpha-5/beta-3 recycling and promoting its recruitment in newly forming focal adhesion. In osteoblast differentiation, mediates the bone morphogenetic protein 2 (BMP2)-induced nuclear export of HDAC7, which results in the inhibition of HDAC7 transcriptional repression of RUNX2. In neurons, plays an important role in neuronal polarity by regulating the biogenesis of TGN-derived dendritic vesicles, and is involved in the maintenance of dendritic arborization and Golgi structure in hippocampal cells. May potentiate mitogenesis induced by the neuropeptide bombesin or vasopressin by mediating an increase in the duration of MAPK1/3 (ERK1/2) signaling, which leads to accumulation of immediate-early gene products including FOS that stimulate cell cycle progression. Plays an important role in the proliferative response induced by low calcium in keratinocytes, through sustained activation of MAPK1/3 (ERK1/2) pathway. Downstream of novel PKC signaling, plays a role in cardiac hypertrophy by phosphorylating HDAC5, which in turn triggers XPO1/CRM1-dependent nuclear export of HDAC5, MEF2A transcriptional activation and induction of downstream target genes that promote myocyte hypertrophy and pathological cardiac remodeling. Mediates cardiac troponin I (TNNI3) phosphorylation at the PKA sites, which results in reduced myofilament calcium sensitivity, and accelerated crossbridge cycling kinetics. The PRKD1-HDAC5 pathway is also involved in angiogenesis by mediating VEGFA-induced specific subset of gene expression, cell migration, and tube formation. In response to VEGFA, is necessary and required for HDAC7 phosphorylation which induces HDAC7 nuclear export and endothelial cell proliferation and migration. During apoptosis induced by cytarabine and other genotoxic agents, PRKD1 is cleaved by caspase-3 at Asp-378, resulting in activation of its kinase function and increased sensitivity of cells to the cytotoxic effects of genotoxic agents. In epithelial cells, is required for transducing flagellin-stimulated inflammatory responses by binding and phosphorylating TLR5, which contributes to MAPK14/p38 activation and production of inflammatory cytokines. Acts as an activator of NLRP3 inflammasome assembly by mediating phosphorylation of NLRP3. May play a role in inflammatory response by mediating activation of NF-kappa-B. May be involved in pain transmission by directly modulating TRPV1 receptor. Plays a role in activated KRAS-mediated stabilization of ZNF304 in colorectal cancer (CRC) cells. Regulates nuclear translocation of transcription factor TFEB in macrophages upon live S.enterica infection. This is Serine/threonine-protein kinase D1 (Prkd1) from Rattus norvegicus (Rat).